Reading from the N-terminus, the 463-residue chain is Glutamate--tRNA ligase 2 (463 aa).

A 'HIGH' region motif is present at residues 10–20 (PSPTGFLHIGS). Positions 239–243 (KLSKR) match the 'KMSKS' region motif. ATP is bound at residue lysine 242.

Belongs to the class-I aminoacyl-tRNA synthetase family. Glutamate--tRNA ligase type 1 subfamily. Monomer.

The protein localises to the cytoplasm. It carries out the reaction tRNA(Glu) + L-glutamate + ATP = L-glutamyl-tRNA(Glu) + AMP + diphosphate. In terms of biological role, catalyzes the attachment of glutamate to tRNA(Glu) in a two-step reaction: glutamate is first activated by ATP to form Glu-AMP and then transferred to the acceptor end of tRNA(Glu). The protein is Glutamate--tRNA ligase 2 of Rickettsia akari (strain Hartford).